A 164-amino-acid polypeptide reads, in one-letter code: C-type lectin 1 (164 aa).

An N-terminal signal peptide occupies residues 1-23 (MGRFLFASLGLLVVAFSLSGTGA). 3 disulfide bridges follow: Cys27–Cys38, Cys55–Cys154, and Cys129–Cys146. The C-type lectin domain occupies 34-155 (YNVSCYKLFY…CTLLHPFLCQ (122 aa)). N-linked (GlcNAc...) asparagine glycans are attached at residues Asn35 and Asn109. The short motif at 119-121 (EPN) is the Mannose-binding element. Glu127, Asn142, and Asp143 together coordinate Ca(2+).

It belongs to the true venom lectin family. As to expression, expressed by the venom gland.

The protein localises to the secreted. In terms of biological role, mannose-binding lectin which recognizes specific carbohydrate structures and agglutinates a variety of animal cells by binding to cell-surface glycoproteins and glycolipids. May be a calcium-dependent lectin. The sequence is that of C-type lectin 1 from Hydrophis hardwickii (Hardwick's spine-bellied seasnake).